The chain runs to 37 residues: Large ribosomal subunit protein bL36 (37 aa).

This sequence belongs to the bacterial ribosomal protein bL36 family.

The sequence is that of Large ribosomal subunit protein bL36 from Trichlorobacter lovleyi (strain ATCC BAA-1151 / DSM 17278 / SZ) (Geobacter lovleyi).